A 757-amino-acid chain; its full sequence is Xaa-Pro dipeptidyl-peptidase (757 aa).

Catalysis depends on charge relay system residues serine 348, aspartate 468, and histidine 498.

Belongs to the peptidase S15 family. In terms of assembly, homodimer.

It is found in the cytoplasm. It catalyses the reaction Hydrolyzes Xaa-Pro-|- bonds to release unblocked, N-terminal dipeptides from substrates including Ala-Pro-|-p-nitroanilide and (sequentially) Tyr-Pro-|-Phe-Pro-|-Gly-Pro-|-Ile.. Removes N-terminal dipeptides sequentially from polypeptides having unsubstituted N-termini provided that the penultimate residue is proline. The polypeptide is Xaa-Pro dipeptidyl-peptidase (Streptococcus pneumoniae (strain ATCC 700669 / Spain 23F-1)).